Here is a 325-residue protein sequence, read N- to C-terminus: tRNA dimethylallyltransferase (325 aa).

21–28 (GPTASGKS) is an ATP binding site. Residue 23–28 (TASGKS) participates in substrate binding. Residues 166–170 (QRLAR) form an interaction with substrate tRNA region.

It belongs to the IPP transferase family. As to quaternary structure, monomer. It depends on Mg(2+) as a cofactor.

The catalysed reaction is adenosine(37) in tRNA + dimethylallyl diphosphate = N(6)-dimethylallyladenosine(37) in tRNA + diphosphate. In terms of biological role, catalyzes the transfer of a dimethylallyl group onto the adenine at position 37 in tRNAs that read codons beginning with uridine, leading to the formation of N6-(dimethylallyl)adenosine (i(6)A). The chain is tRNA dimethylallyltransferase from Acidiphilium cryptum (strain JF-5).